The sequence spans 442 residues: UDP-N-acetylmuramate--L-alanine ligase (442 aa).

Position 109–115 (109–115 (GAHGKTS)) interacts with ATP.

The protein belongs to the MurCDEF family.

It is found in the cytoplasm. The catalysed reaction is UDP-N-acetyl-alpha-D-muramate + L-alanine + ATP = UDP-N-acetyl-alpha-D-muramoyl-L-alanine + ADP + phosphate + H(+). It participates in cell wall biogenesis; peptidoglycan biosynthesis. Functionally, cell wall formation. The sequence is that of UDP-N-acetylmuramate--L-alanine ligase from Streptococcus pyogenes serotype M18 (strain MGAS8232).